A 236-amino-acid chain; its full sequence is LHFPL tetraspan subfamily member 3 protein (236 aa).

Helical transmembrane passes span 36–56 (IGVL…VCFI), 110–130 (FFIG…TLFF), 140–160 (ICAW…MIFP), and 191–211 (ILAI…FVLG).

This sequence belongs to the LHFP family.

The protein resides in the membrane. In Homo sapiens (Human), this protein is LHFPL tetraspan subfamily member 3 protein.